The sequence spans 440 residues: 26S proteasome regulatory subunit 4 (440 aa).

The span at 1–13 (MGQSQSGGHGPGG) shows a compositional bias: gly residues. The segment at 1–49 (MGQSQSGGHGPGGGKKDDKDKKKKYEPPVPTRVGKKKKKTKGPDAASKL) is disordered. G2 is lipidated: N-myristoyl glycine. The residue at position 4 (S4) is a Phosphoserine. The span at 14–26 (GKKDDKDKKKKYE) shows a compositional bias: basic and acidic residues. T53 is modified (phosphothreonine). Residues 84 to 104 (QMKPLEEKQEEERSKVDDLRG) form a disordered region. Residues 86–103 (KPLEEKQEEERSKVDDLR) show a composition bias toward basic and acidic residues. Position 226-233 (226-233 (GPPGTGKT)) interacts with ATP. K237 participates in a covalent cross-link: Glycyl lysine isopeptide (Lys-Gly) (interchain with G-Cter in ubiquitin). Residue K258 is modified to N6-acetyllysine. Residue T434 is modified to Phosphothreonine. Residue Y439 is modified to Phosphotyrosine.

The protein belongs to the AAA ATPase family. In terms of assembly, component of the 19S proteasome regulatory particle complex. The 26S proteasome consists of a 20S core particle (CP) and two 19S regulatory subunits (RP). The regulatory particle is made of a lid composed of 9 subunits, a base containing 6 ATPases including PSMC1 and few additional components. Interacts with SCA7. Interacts with NGLY1. Interacts with PAAF1.

The protein localises to the cytoplasm. The protein resides in the nucleus. Its subcellular location is the membrane. Functionally, component of the 26S proteasome, a multiprotein complex involved in the ATP-dependent degradation of ubiquitinated proteins. This complex plays a key role in the maintenance of protein homeostasis by removing misfolded or damaged proteins, which could impair cellular functions, and by removing proteins whose functions are no longer required. Therefore, the proteasome participates in numerous cellular processes, including cell cycle progression, apoptosis, or DNA damage repair. PSMC1 belongs to the heterohexameric ring of AAA (ATPases associated with diverse cellular activities) proteins that unfolds ubiquitinated target proteins that are concurrently translocated into a proteolytic chamber and degraded into peptides. In Homo sapiens (Human), this protein is 26S proteasome regulatory subunit 4 (PSMC1).